Here is an 84-residue protein sequence, read N- to C-terminus: Large ribosomal subunit protein bL27 (84 aa).

Positions 1–22 (MAHKKAGGSTRNGRDSESKRLG) are disordered.

The protein belongs to the bacterial ribosomal protein bL27 family.

This chain is Large ribosomal subunit protein bL27, found in Shewanella oneidensis (strain ATCC 700550 / JCM 31522 / CIP 106686 / LMG 19005 / NCIMB 14063 / MR-1).